The primary structure comprises 538 residues: Nicotinate phosphoribosyltransferase (538 aa).

Residues Tyr-21 and Thr-210 each contribute to the nicotinate site. Phosphohistidine is present on His-213. A nicotinate-binding site is contributed by Arg-318. Thr-380 serves as a coordination point for 5-phospho-alpha-D-ribose 1-diphosphate.

Belongs to the NAPRTase family. As to quaternary structure, homodimer. The cofactor is Mg(2+). Mn(2+) serves as cofactor. Post-translationally, transiently phosphorylated on a His residue during the reaction cycle. Phosphorylation strongly increases the affinity for substrates and increases the rate of nicotinate D-ribonucleotide production. Dephosphorylation regenerates the low-affinity form of the enzyme, leading to product release.

It is found in the cytoplasm. The protein localises to the cytosol. It catalyses the reaction nicotinate + 5-phospho-alpha-D-ribose 1-diphosphate + ATP + H2O = nicotinate beta-D-ribonucleotide + ADP + phosphate + diphosphate. It participates in cofactor biosynthesis; NAD(+) biosynthesis; nicotinate D-ribonucleotide from nicotinate: step 1/1. In terms of biological role, catalyzes the first step in the biosynthesis of NAD from nicotinic acid, the ATP-dependent synthesis of beta-nicotinate D-ribonucleotide from nicotinate and 5-phospho-D-ribose 1-phosphate. Helps prevent cellular oxidative stress via its role in NAD biosynthesis. The sequence is that of Nicotinate phosphoribosyltransferase (NAPRT) from Bos taurus (Bovine).